We begin with the raw amino-acid sequence, 668 residues long: tRNA 5-methylaminomethyl-2-thiouridine biosynthesis bifunctional protein MnmC (668 aa).

Positions 1–245 are tRNA (mnm(5)s(2)U34)-methyltransferase; sequence MKHYAIQPAN…KREMLCGVME (245 aa). The segment at 270 to 668 is FAD-dependent cmnm(5)s(2)U34 oxidoreductase; that stretch reads IGGGIASALL…LLKGKAVKAG (399 aa).

It in the N-terminal section; belongs to the methyltransferase superfamily. tRNA (mnm(5)s(2)U34)-methyltransferase family. The protein in the C-terminal section; belongs to the DAO family. It depends on FAD as a cofactor.

The protein localises to the cytoplasm. The enzyme catalyses 5-aminomethyl-2-thiouridine(34) in tRNA + S-adenosyl-L-methionine = 5-methylaminomethyl-2-thiouridine(34) in tRNA + S-adenosyl-L-homocysteine + H(+). Its function is as follows. Catalyzes the last two steps in the biosynthesis of 5-methylaminomethyl-2-thiouridine (mnm(5)s(2)U) at the wobble position (U34) in tRNA. Catalyzes the FAD-dependent demodification of cmnm(5)s(2)U34 to nm(5)s(2)U34, followed by the transfer of a methyl group from S-adenosyl-L-methionine to nm(5)s(2)U34, to form mnm(5)s(2)U34. This Escherichia coli (strain SMS-3-5 / SECEC) protein is tRNA 5-methylaminomethyl-2-thiouridine biosynthesis bifunctional protein MnmC.